We begin with the raw amino-acid sequence, 348 residues long: MSIPTTQKGVIFYENGGQLYYKDIPVPKPKSNELLINVKYSGVCHTDLHAWKGDWPLDTKLPLVGGHEGAGVVVAMGDNVKGWKIGDLAGIKWLNGSCMNCEECELSNESNCPDADLSGYTHDGSFQQYATADAVQAAHIPAGTDLAQVAPILCAGVTVYKALKTAEMKAGDWVAISGAAGGLGSLAVQYAKAMGFRVLGIDGGEGKEELFKSLGGEVFIDFTKSKDIVGEVIKATNGGAHGVINVSVSEKAIESSIEYCRSNGTVVLVGLPKDAKCKSDVFNQVVKSIHIVGSYVGNRADTREALDFFCRGLVNAPIKVVGLSTLPEIYEKMEQGKVLGRYVVDTSK.

Serine 2 carries the N-acetylserine modification. Positions 44, 67, 98, 101, 104, 112, and 154 each coordinate Zn(2+). NAD(+) is bound by residues glycine 178 to glycine 184, aspartate 202, lysine 207, valine 269 to leucine 271, and arginine 341.

Belongs to the zinc-containing alcohol dehydrogenase family. Homotetramer. Zn(2+) serves as cofactor.

The protein resides in the cytoplasm. It catalyses the reaction a primary alcohol + NAD(+) = an aldehyde + NADH + H(+). It carries out the reaction a secondary alcohol + NAD(+) = a ketone + NADH + H(+). This Kluyveromyces marxianus (Yeast) protein is Alcohol dehydrogenase 2 (ADH2).